The chain runs to 146 residues: Large ribosomal subunit protein uL24z (146 aa).

2 disordered regions span residues 1–26 (MKYNPRVTSSRRKNRKAHFTASSSER) and 121–146 (KAKGRAAADKEKGTKFTSEDVMQNVD). Residues 9-18 (SSRRKNRKAH) are compositionally biased toward basic residues. Basic and acidic residues predominate over residues 121–138 (KAKGRAAADKEKGTKFTS).

It belongs to the universal ribosomal protein uL24 family.

This chain is Large ribosomal subunit protein uL24z (RPL26A), found in Arabidopsis thaliana (Mouse-ear cress).